The primary structure comprises 114 residues: Histone H3-6 (114 aa).

Over residues 1–17 (NTGGKAPRKHIAHKQAK) the composition is skewed to basic residues. Residues 1-32 (NTGGKAPRKHIAHKQAKKSSAAAATGGVKKPH) form a disordered region. Low complexity predominate over residues 18–28 (KSSAAAATGGV).

This sequence belongs to the histone H3 family. In terms of assembly, the nucleosome is a histone octamer containing two molecules each of H2A, H2B, H3 and H4 assembled in one H3-H4 heterotetramer and two H2A-H2B heterodimers. The octamer wraps approximately 147 bp of DNA.

The protein localises to the nucleus. It is found in the chromosome. Core component of nucleosome. Nucleosomes wrap and compact DNA into chromatin, limiting DNA accessibility to the cellular machineries which require DNA as a template. Histones thereby play a central role in transcription regulation, DNA repair, DNA replication and chromosomal stability. DNA accessibility is regulated via a complex set of post-translational modifications of histones, also called histone code, and nucleosome remodeling. This Stylonychia lemnae (Ciliate) protein is Histone H3-6 (H3-6).